We begin with the raw amino-acid sequence, 136 residues long: Histone H3 (136 aa).

Residues 1-42 are disordered; it reads MARTKQTARKSTGGKAPRKQIAAKAARKAAPSTGGVKKPHRY. An N6,N6,N6-trimethyllysine; alternate modification is found at Lys-5. N6,N6-dimethyllysine; alternate is present on Lys-5. N6-methyllysine; alternate occurs at positions 5 and 10. N6-acetyllysine; alternate is present on Lys-10. Ser-11 bears the Phosphoserine mark. Lys-15 carries the N6,N6-dimethyllysine; alternate modification. Lys-15, Lys-19, Lys-24, Lys-28, and Lys-37 each carry N6-acetyllysine; alternate. Residues Lys-19, Lys-24, Lys-28, and Lys-37 each carry the N6-methyllysine; alternate modification. Residues 19 to 31 are compositionally biased toward low complexity; sequence KQIAAKAARKAAP. 2 positions are modified to N6,N6,N6-trimethyllysine; alternate: Lys-28 and Lys-37. N6,N6-dimethyllysine; alternate is present on residues Lys-28 and Lys-37. An N6-acetyllysine mark is found at Lys-57 and Lys-65. Position 80 is an N6,N6,N6-trimethyllysine; alternate (Lys-80). Lys-80 carries the N6,N6-dimethyllysine; alternate modification. At Lys-80 the chain carries N6-methyllysine; alternate.

It belongs to the histone H3 family. The nucleosome is a histone octamer containing two molecules each of H2A, H2B, H3 and H4 assembled in one H3-H4 heterotetramer and two H2A-H2B heterodimers. The octamer wraps approximately 147 bp of DNA. Post-translationally, phosphorylated to form H3S10ph. H3S10ph promotes subsequent H3K14ac formation and is required for transcriptional activation through TBP recruitment to the promoters. In terms of processing, mono-, di- and trimethylated by the COMPASS complex to form H3K4me1/2/3. H3K4me activates gene expression by regulating transcription elongation and plays a role in telomere length maintenance. H3K4me enrichment correlates with transcription levels, and occurs in a 5' to 3' gradient with H3K4me3 enrichment at the 5'-end of genes, shifting to H3K4me2 and then H3K4me1. Methylated by SET2 to form H3K36me. H3K36me represses gene expression. Methylated by DOT1 to form H3K79me. H3K79me is required for association of SIR proteins with telomeric regions and for telomeric silencing. The COMPASS-mediated formation of H3K4me2/3 and the DOT1-mediated formation of H3K79me require H2BK123ub1. Acetylation of histone H3 leads to transcriptional activation. H3K14ac formation by GCN5 is promoted by H3S10ph. H3K14ac can also be formed by ESA1. H3K56ac formation occurs predominantly in newly synthesized H3 molecules during G1, S and G2/M of the cell cycle and may be involved in DNA repair.

It is found in the nucleus. The protein localises to the chromosome. Its function is as follows. Core component of nucleosome. Nucleosomes wrap and compact DNA into chromatin, limiting DNA accessibility to the cellular machineries which require DNA as a template. Histones thereby play a central role in transcription regulation, DNA repair, DNA replication and chromosomal stability. DNA accessibility is regulated via a complex set of post-translational modifications of histones, also called histone code, and nucleosome remodeling. This is Histone H3 (HHT1) from Coccidioides immitis (strain RS) (Valley fever fungus).